A 328-amino-acid polypeptide reads, in one-letter code: Alanine racemase (328 aa).

Lys33 serves as the catalytic Proton acceptor; specific for D-alanine. Lys33 is subject to N6-(pyridoxal phosphate)lysine. Arg118 contacts substrate. Tyr237 acts as the Proton acceptor; specific for L-alanine in catalysis. Residue Met283 participates in substrate binding.

Belongs to the alanine racemase family. It depends on pyridoxal 5'-phosphate as a cofactor.

It catalyses the reaction L-alanine = D-alanine. It functions in the pathway amino-acid biosynthesis; D-alanine biosynthesis; D-alanine from L-alanine: step 1/1. In terms of biological role, catalyzes the interconversion of L-alanine and D-alanine. May also act on other amino acids. This is Alanine racemase (alr) from Campylobacter jejuni subsp. jejuni serotype O:23/36 (strain 81-176).